The primary structure comprises 311 residues: Manganese-dependent ADP-ribose/CDP-alcohol diphosphatase (311 aa).

Positions 17, 19, 64, 99, 218, 255, and 257 each coordinate Zn(2+).

It belongs to the ADPRibase-Mn family. Monomer. Requires Mg(2+) as cofactor.

The catalysed reaction is CDP-choline + H2O = phosphocholine + CMP + 2 H(+). It catalyses the reaction ADP-D-ribose + H2O = D-ribose 5-phosphate + AMP + 2 H(+). It carries out the reaction CDP-glycerol + H2O = sn-glycerol 3-phosphate + CMP + 2 H(+). In terms of biological role, hydrolyzes ADP-ribose, IDP-ribose, CDP-glycerol, CDP-choline and CDP-ethanolamine, but not other non-reducing ADP-sugars or CDP-glucose. The chain is Manganese-dependent ADP-ribose/CDP-alcohol diphosphatase from Arabidopsis thaliana (Mouse-ear cress).